A 903-amino-acid polypeptide reads, in one-letter code: Protein translocase subunit SecA (903 aa).

ATP is bound by residues Q89, 107 to 111, and D502; that span reads GEGKT. Positions 887, 889, 898, and 899 each coordinate Zn(2+).

This sequence belongs to the SecA family. In terms of assembly, monomer and homodimer. Part of the essential Sec protein translocation apparatus which comprises SecA, SecYEG and auxiliary proteins SecDF-YajC and YidC. Zn(2+) is required as a cofactor.

The protein localises to the cell inner membrane. The protein resides in the cytoplasm. It carries out the reaction ATP + H2O + cellular proteinSide 1 = ADP + phosphate + cellular proteinSide 2.. In terms of biological role, part of the Sec protein translocase complex. Interacts with the SecYEG preprotein conducting channel. Has a central role in coupling the hydrolysis of ATP to the transfer of proteins into and across the cell membrane, serving both as a receptor for the preprotein-SecB complex and as an ATP-driven molecular motor driving the stepwise translocation of polypeptide chains across the membrane. The protein is Protein translocase subunit SecA of Jannaschia sp. (strain CCS1).